We begin with the raw amino-acid sequence, 127 residues long: Protein yippee-like 4 (127 aa).

Positions 27 to 124 (RTYSCVHCRA…IEMSHMVKDN (98 aa)) constitute a Yippee domain. Zn(2+) contacts are provided by C31, C34, C87, and C90. Phosphothreonine occurs at positions 92 and 93. Position 98 is a phosphotyrosine (Y98).

This sequence belongs to the yippee family. As to expression, detected in brain, spleen and testis.

The protein resides in the nucleus. The protein localises to the nucleolus. The chain is Protein yippee-like 4 (Ypel4) from Mus musculus (Mouse).